Reading from the N-terminus, the 148-residue chain is Transcription antitermination protein NusB (148 aa).

It belongs to the NusB family.

In terms of biological role, involved in transcription antitermination. Required for transcription of ribosomal RNA (rRNA) genes. Binds specifically to the boxA antiterminator sequence of the ribosomal RNA (rrn) operons. In Nitrosococcus oceani (strain ATCC 19707 / BCRC 17464 / JCM 30415 / NCIMB 11848 / C-107), this protein is Transcription antitermination protein NusB.